The sequence spans 346 residues: MALLKVKFDQKKRVKLAQGLWLMNWLSVLAGIVIFSLGLFLKIELRKRSDVMNNSESHFVPNSLIGMGVLSCVFNSLAGKICYDALDPSKYAKWKPWLKSYLVVCVLFNIVLFLVALCCFLMRGSLESTLAQGLKNGMKYYRDTDTPGRCFMKKTIDLLQIEFKCCGNNGFRDWFEIQWISNRYLDFSSKEVKDRIKSNVDGRYLVDGVPFSCCNPNSPRPCIQYQLTNNSAHYSYDHQTEELNLWVRGCRAALLSYYGSLMNSMGAVTLLVWLFEVSITIGLRYLHTALEGVSNPEDLECESEGWLLEKSVSETWKAFLESLKKLGKSNQVEAEGADAGQAPEAG.

The Cytoplasmic segment spans residues 1-24 (MALLKVKFDQKKRVKLAQGLWLMN). The helical transmembrane segment at 25–43 (WLSVLAGIVIFSLGLFLKI) threads the bilayer. The Lumenal segment spans residues 44–61 (ELRKRSDVMNNSESHFVP). Asn53 carries an N-linked (GlcNAc...) asparagine glycan. A helical membrane pass occupies residues 62 to 80 (NSLIGMGVLSCVFNSLAGK). At 81–99 (ICYDALDPSKYAKWKPWLK) the chain is on the cytoplasmic side. A helical transmembrane segment spans residues 100–123 (SYLVVCVLFNIVLFLVALCCFLMR). Topologically, residues 124 to 264 (GSLESTLAQG…LSYYGSLMNS (141 aa)) are lumenal. A glycan (N-linked (GlcNAc...) asparagine) is linked at Asn229. The chain crosses the membrane as a helical span at residues 265–290 (MGAVTLLVWLFEVSITIGLRYLHTAL). Over 291-346 (EGVSNPEDLECESEGWLLEKSVSETWKAFLESLKKLGKSNQVEAEGADAGQAPEAG) the chain is Cytoplasmic. An interaction with MREG region spans residues 341–346 (QAPEAG).

The protein belongs to the PRPH2/ROM1 family. Homodimer; disulfide-linked. Forms a homotetramer. Forms a heterotetramer with ROM1. Homotetramer and heterotetramer core complexes go on to form higher order complexes by formation of intermolecular disulfide bonds. Interacts with MREG. Interacts with STX3. Interacts with SNAP25. In terms of tissue distribution, retina (photoreceptor). In rim region of ROS (rod outer segment) disks.

Its subcellular location is the membrane. The protein localises to the cell projection. The protein resides in the cilium. It is found in the photoreceptor outer segment. It localises to the photoreceptor inner segment. Essential for retina photoreceptor outer segment disk morphogenesis, may also play a role with ROM1 in the maintenance of outer segment disk structure. Required for the maintenance of retinal outer nuclear layer thickness. Required for the correct development and organization of the photoreceptor inner segment. This chain is Peripherin-2 (PRPH2), found in Felis catus (Cat).